A 270-amino-acid chain; its full sequence is MSYQYGQGYSGPGGNAPQWQQPPRAPYAGGPAAGQYGSPYGSAPPGQQYGGGSPYGSYGQPGPRAPYGGGQAPGGPYGGYGQPQGGPYRQQGSAGNVPPGVNPEAYQWFSTVDSDQSGYINAKELKQALMNFNNSSFNDETCIMMLNMFDKTKSGRVDVFGFSALWTFLQQWRAAFQQFDRDRSGSINTNEMHQALSQMGYNLSPQFIQELVNRYSVRGGTGVLQLDRFIQVCTQLQSMTQAFREKDTGMTGNVRMSYEDFLSSAITRLM.

The tract at residues 1–97 is disordered; sequence MSYQYGQGYS…YRQQGSAGNV (97 aa). 5 tandem repeats follow at residues 22–30, 44–54, 62–70, 72–81, and 83–91. Residues 22–91 are 5 X 9 AA approximate tandem repeat of [AP]-P-G-G-P-Y-G-G-P-P; sequence PPRAPYAGGP…QPQGGPYRQQ (70 aa). 2 stretches are compositionally biased toward low complexity: residues 26–47 and 55–66; these read PYAG…PPGQ and YGSYGQPGPRAP. Over residues 67–84 the composition is skewed to gly residues; that stretch reads YGGGQAPGGPYGGYGQPQ. 5 consecutive EF-hand domains span residues 100-135, 141-169, 170-202, 203-239, and 240-269; these read GVNP…FNNS, TCIM…WTFL, QQWR…MGYN, LSPQ…LQSM, and TQAF…ITRL. Ca(2+) contacts are provided by Asp-113, Asp-115, Ser-117, Tyr-119, and Glu-124. Positions 180, 182, 184, 186, and 191 each coordinate Ca(2+).

Heterodimer; heterodimerizes (via the EF-hand 5) with pdcd6.

Its subcellular location is the cytoplasm. The protein resides in the endoplasmic reticulum. The protein localises to the membrane. It localises to the cytoplasmic vesicle. It is found in the COPII-coated vesicle membrane. Calcium-binding protein that acts as an adapter that bridges unrelated proteins or stabilizes weak protein-protein complexes in response to calcium. Acts as a negative regulator of ER-Golgi transport. The sequence is that of Peflin from Danio rerio (Zebrafish).